The chain runs to 319 residues: Succinoglycan biosynthesis protein ExoW (319 aa).

Belongs to the glycosyltransferase 2 family.

The protein localises to the cell membrane. It functions in the pathway glycan metabolism; exopolysaccharide biosynthesis. In terms of biological role, glycosyltransferase required for the synthesis of succinoglycan (EPS I). Needed for the addition of the seventh sugar (glucose), catalyzes the formation of a beta-1,3 linkage between the seventh and eighth sugar. This is Succinoglycan biosynthesis protein ExoW (exoW) from Rhizobium meliloti (strain 1021) (Ensifer meliloti).